The chain runs to 87 residues: Apolipoprotein C-I (87 aa).

Positions 1 to 26 (MRFILSLPVLAVVLAMVLEGPAPAQA) are cleaved as a signal peptide.

Belongs to the apolipoprotein C1 family.

The protein localises to the secreted. Its function is as follows. Inhibitor of lipoprotein binding to the low density lipoprotein (LDL) receptor, LDL receptor-related protein, and very low density lipoprotein (VLDL) receptor. Associates with high density lipoproteins (HDL) and the triacylglycerol-rich lipoproteins in the plasma and makes up about 10% of the protein of the VLDL and 2% of that of HDL. Appears to interfere directly with fatty acid uptake and is also the major plasma inhibitor of cholesteryl ester transfer protein (CETP). Binds free fatty acids and reduces their intracellular esterification. Modulates the interaction of APOE with beta-migrating VLDL and inhibits binding of beta-VLDL to the LDL receptor-related protein. In Pteropus alecto (Black flying fox), this protein is Apolipoprotein C-I (APOC1).